Reading from the N-terminus, the 374-residue chain is Chaperone protein DnaJ (374 aa).

The region spanning 4–68 (DYYEILGVSR…ETRNRYDRFG (65 aa)) is the J domain. Residues 133–215 (GGEKEIRIRH…CGGSGRRQET (83 aa)) form a CR-type zinc finger. Positions 146, 149, 163, 166, 189, 192, 203, and 206 each coordinate Zn(2+). 4 CXXCXGXG motif repeats span residues 146-153 (CQTCKGSG), 163-170 (CTTCSGTG), 189-196 (CPTCDGAG), and 203-210 (CDVCGGSG).

The protein belongs to the DnaJ family. As to quaternary structure, homodimer. Zn(2+) is required as a cofactor.

It localises to the cytoplasm. Its function is as follows. Participates actively in the response to hyperosmotic and heat shock by preventing the aggregation of stress-denatured proteins and by disaggregating proteins, also in an autonomous, DnaK-independent fashion. Unfolded proteins bind initially to DnaJ; upon interaction with the DnaJ-bound protein, DnaK hydrolyzes its bound ATP, resulting in the formation of a stable complex. GrpE releases ADP from DnaK; ATP binding to DnaK triggers the release of the substrate protein, thus completing the reaction cycle. Several rounds of ATP-dependent interactions between DnaJ, DnaK and GrpE are required for fully efficient folding. Also involved, together with DnaK and GrpE, in the DNA replication of plasmids through activation of initiation proteins. This is Chaperone protein DnaJ from Microcystis aeruginosa (strain NIES-843 / IAM M-2473).